Here is a 488-residue protein sequence, read N- to C-terminus: Regulatory protein ViaA (488 aa).

This sequence belongs to the ViaA family. As to quaternary structure, homodimer. Interacts with RavA.

Its subcellular location is the cytoplasm. Its function is as follows. Component of the RavA-ViaA chaperone complex, which may act on the membrane to optimize the function of some of the respiratory chains. ViaA stimulates the ATPase activity of RavA. This is Regulatory protein ViaA from Yersinia pseudotuberculosis serotype O:1b (strain IP 31758).